The primary structure comprises 116 residues: MIDAIKNVSSLSATRGLGSIATDLSSAASNAIASTPETAIGSSAVGSFASVMSDVAKNTVSTLKEAENASFAGIKGTMSTREVVDKVMQADQTLQTAIALRDKMVSAFLDITKMQI.

The protein belongs to the FliE family.

The protein localises to the bacterial flagellum basal body. This Rhizobium rhizogenes (strain K84 / ATCC BAA-868) (Agrobacterium radiobacter) protein is Flagellar hook-basal body complex protein FliE.